The chain runs to 199 residues: Charged multivesicular body protein 1b (199 aa).

Residues 26-48 are a coiled coil; it reads DKEEKAEKAKIKKAIQKGNMEVA. Positions 132-156 are interaction with IST1; it reads MEDTMSSTTTLTTPQNQVDMLLQEM. Residues 167–199 are disordered; that stretch reads ELPQGQTGSVGTSVASAEQDELSQRLARLRDQV. Residues 170–182 are compositionally biased toward polar residues; the sequence is QGQTGSVGTSVAS. An interaction with SPAST region spans residues 174 to 199; it reads GSVGTSVASAEQDELSQRLARLRDQV. The stretch at 178–199 forms a coiled coil; that stretch reads TSVASAEQDELSQRLARLRDQV. Residues 180-196 form an interaction with VPS4A, MITD1 and STAMBP region; sequence VASAEQDELSQRLARLR. Positions 180 to 199 are interaction with VTA1; the sequence is VASAEQDELSQRLARLRDQV. The interaction with VPS4B stretch occupies residues 183–199; the sequence is AEQDELSQRLARLRDQV. Positions 186-196 match the MIT-interacting motif motif; the sequence is DELSQRLARLR.

Belongs to the SNF7 family. Probable peripherally associated component of the endosomal sorting required for transport complex III (ESCRT-III). ESCRT-III components are thought to multimerize to form a flat lattice on the perimeter membrane of the endosome. Several assembly forms of ESCRT-III may exist that interact and act sequentially. Interacts with CHMP1A. Interacts with VTA1; the interaction probably involves the open conformation of CHMP1B. Interacts with CHMP2A. Interacts with VPS4A; the interaction is direct. Interacts with VPS4B; the interaction is direct. Interacts with SPAST (via MIT domain); the interaction is direct. Interacts with IST1. Interacts with MITD1. Interacts with STAMBP. In terms of tissue distribution, widely expressed. Expressed in pancreas, kidney, skeletal muscle, liver, lung, placenta and brain.

The protein resides in the cytoplasm. Its subcellular location is the cytosol. It is found in the endosome. It localises to the late endosome membrane. In terms of biological role, probable peripherally associated component of the endosomal sorting required for transport complex III (ESCRT-III) which is involved in multivesicular bodies (MVBs) formation and sorting of endosomal cargo proteins into MVBs. MVBs contain intraluminal vesicles (ILVs) that are generated by invagination and scission from the limiting membrane of the endosome and mostly are delivered to lysosomes enabling degradation of membrane proteins, such as stimulated growth factor receptors, lysosomal enzymes and lipids. The MVB pathway appears to require the sequential function of ESCRT-O, -I,-II and -III complexes. ESCRT-III proteins mostly dissociate from the invaginating membrane before the ILV is released. The ESCRT machinery also functions in topologically equivalent membrane fission events, such as the terminal stages of cytokinesis and the budding of enveloped viruses (HIV-1 and other lentiviruses). ESCRT-III proteins are believed to mediate the necessary vesicle extrusion and/or membrane fission activities, possibly in conjunction with the AAA ATPase VPS4. Involved in cytokinesis. Involved in recruiting VPS4A and/or VPS4B and SPAST to the midbody of dividing cells. Involved in HIV-1 p6- and p9-dependent virus release. The sequence is that of Charged multivesicular body protein 1b (CHMP1B) from Homo sapiens (Human).